Consider the following 241-residue polypeptide: MCATPVSPTPLPSTTPLTLRWRGSEPYEASFEAMRTFTDERTADTPDEIWLVEHPPVFTLGQAGNPAHLLAADSGIPLVKVDRGGQITYHGPGQVVAYLLLDLRRRKLMVRELVTRIEQAVIDTLAAYNLAGERKAGAPGIYVAPGPDVGLHAGAKIAALGLKIRNGCSYHGVSLNVNMDLRPFLAINPCGYAGLETVDMATLGVAAGWDDVARTFAERLTANLDGSPAAVAQPQAGVLTA.

In terms of domain architecture, BPL/LPL catalytic spans 43–228; sequence ADTPDEIWLV…RLTANLDGSP (186 aa). Substrate contacts are provided by residues 83–90, 159–161, and 172–174; these read RGGQITYH, ALG, and GVS. Residue Cys190 is the Acyl-thioester intermediate of the active site.

It belongs to the LipB family.

The protein localises to the cytoplasm. The catalysed reaction is octanoyl-[ACP] + L-lysyl-[protein] = N(6)-octanoyl-L-lysyl-[protein] + holo-[ACP] + H(+). It participates in protein modification; protein lipoylation via endogenous pathway; protein N(6)-(lipoyl)lysine from octanoyl-[acyl-carrier-protein]: step 1/2. Catalyzes the transfer of endogenously produced octanoic acid from octanoyl-acyl-carrier-protein onto the lipoyl domains of lipoate-dependent enzymes. Lipoyl-ACP can also act as a substrate although octanoyl-ACP is likely to be the physiological substrate. The sequence is that of Octanoyltransferase from Paraburkholderia phytofirmans (strain DSM 17436 / LMG 22146 / PsJN) (Burkholderia phytofirmans).